The chain runs to 633 residues: DNA-directed RNA polymerase subunit gamma (633 aa).

Positions 74, 76, 89, and 92 each coordinate Zn(2+). Residues aspartate 471, aspartate 473, and aspartate 475 each coordinate Mg(2+).

Belongs to the RNA polymerase beta' chain family. RpoC1 subfamily. In terms of assembly, in cyanobacteria the RNAP catalytic core is composed of 2 alpha, 1 beta, 1 beta', 1 gamma and 1 omega subunit. When a sigma factor is associated with the core the holoenzyme is formed, which can initiate transcription. The cofactor is Mg(2+). It depends on Zn(2+) as a cofactor.

It catalyses the reaction RNA(n) + a ribonucleoside 5'-triphosphate = RNA(n+1) + diphosphate. Its function is as follows. DNA-dependent RNA polymerase catalyzes the transcription of DNA into RNA using the four ribonucleoside triphosphates as substrates. This is DNA-directed RNA polymerase subunit gamma from Prochlorococcus marinus (strain MIT 9211).